The following is a 769-amino-acid chain: Zinc finger protein 585B (769 aa).

The span at Met-1 to Ser-12 shows a compositional bias: polar residues. The interval Met-1–Tyr-23 is disordered. One can recognise a KRAB domain in the interval Val-27–Pro-97. C2H2-type zinc fingers lie at residues Tyr-158–His-180, Tyr-186–His-208, Tyr-214–His-236, His-242–His-264, Tyr-270–His-292, Tyr-298–His-320, Ser-354–His-376, Tyr-382–His-404, Tyr-410–His-432, Tyr-438–His-460, Tyr-466–His-488, Tyr-494–His-516, Tyr-522–His-544, Tyr-550–His-572, Tyr-578–His-600, Tyr-606–His-628, Tyr-634–His-656, Tyr-662–His-684, Tyr-690–His-712, Tyr-718–His-740, and Tyr-746–His-768.

It belongs to the krueppel C2H2-type zinc-finger protein family.

The protein resides in the nucleus. Its function is as follows. May be involved in transcriptional regulation. The protein is Zinc finger protein 585B (ZNF585B) of Pongo abelii (Sumatran orangutan).